The primary structure comprises 482 residues: Glutamyl-tRNA(Gln) amidotransferase subunit A (482 aa).

Active-site charge relay system residues include lysine 75 and serine 150. Serine 174 acts as the Acyl-ester intermediate in catalysis.

This sequence belongs to the amidase family. GatA subfamily. As to quaternary structure, heterotrimer of A, B and C subunits.

It carries out the reaction L-glutamyl-tRNA(Gln) + L-glutamine + ATP + H2O = L-glutaminyl-tRNA(Gln) + L-glutamate + ADP + phosphate + H(+). Allows the formation of correctly charged Gln-tRNA(Gln) through the transamidation of misacylated Glu-tRNA(Gln) in organisms which lack glutaminyl-tRNA synthetase. The reaction takes place in the presence of glutamine and ATP through an activated gamma-phospho-Glu-tRNA(Gln). In Rippkaea orientalis (strain PCC 8801 / RF-1) (Cyanothece sp. (strain PCC 8801)), this protein is Glutamyl-tRNA(Gln) amidotransferase subunit A.